The following is a 318-amino-acid chain: Oncosphere antigen A (318 aa).

Fibronectin type-III domains are found at residues 6–103, 109–207, and 211–308; these read IPQN…TPLP, KPSF…ISRA, and VPQN…TPSV.

This chain is Oncosphere antigen A (ONCA), found in Hydatigena taeniaeformis (Feline tapeworm).